The sequence spans 108 residues: UPF0060 membrane protein YnfA (108 aa).

The Periplasmic segment spans residues 1-5 (MIKTT). A helical membrane pass occupies residues 6–26 (LLFFATALCEIIGCFLPWLWL). Residues 27–30 (KRNA) lie on the Cytoplasmic side of the membrane. Residues 31–51 (SIWLLLPAGISLALFVWLLTL) form a helical membrane-spanning segment. The Periplasmic segment spans residues 52–60 (HPAASGRVY). A helical membrane pass occupies residues 61 to 81 (AAYGGVYVCTALMWLRVVDGV). The Cytoplasmic segment spans residues 82–84 (KLS). A helical membrane pass occupies residues 85-105 (LYDWTGALIALCGMLIIVAGW). At 106–108 (GRT) the chain is on the periplasmic side.

The protein belongs to the UPF0060 family.

It is found in the cell inner membrane. This is UPF0060 membrane protein YnfA from Shigella flexneri serotype 5b (strain 8401).